We begin with the raw amino-acid sequence, 265 residues long: Protein B8 (265 aa).

The chain is Protein B8 (B8) from Homo sapiens (Human).